Reading from the N-terminus, the 151-residue chain is Neuroglobin (151 aa).

The Globin domain occupies 1 to 149 (MERPEPELIR…VVQAMSRGWD (149 aa)). A disulfide bridge links cysteine 46 with cysteine 55. Histidine 64 and histidine 96 together coordinate heme b.

It belongs to the globin family. Monomer. Homodimer and homotetramer; disulfide-linked. Mainly monomeric but also detected as part of homodimers and homotetramers. Interacts with 14-3-3 proteins; regulates the phosphorylation of NGB. Could interact (ferrous form) with G-alpha(i) proteins (GTP-bound form). Post-translationally, phosphorylated during hypoxia by ERK1/ERK2. Phosphorylation regulates the heme pocket hexacoordination preventing the association of His-64 with the heme metal center. Thereby, promotes the access of dioxygen and nitrite to the heme and stimulates the nitrite reductase activity. Phosphorylation during hypoxia is stabilized by 14-3-3 proteins. In terms of processing, an intramolecular Cys-46/Cys-55 disulfide bond, not necessarily present in orthologs, regulates the heme pocket hexacoordination preventing the association of His-64 with the heme metal center. Thereby, promotes the access of dioxygen and nitrite to the heme and stimulates the nitrite reductase activity. Predominantly expressed in brain, the strongest expression is seen in the frontal lobe, the subthalamic nucleus and the thalamus.

It localises to the cytoplasm. It is found in the cytosol. Its subcellular location is the mitochondrion matrix. It carries out the reaction Fe(III)-heme b-[protein] + nitric oxide + H2O = Fe(II)-heme b-[protein] + nitrite + 2 H(+). Its function is as follows. Monomeric globin with a bis-histidyl six-coordinate heme-iron atom through which it can bind dioxygen, carbon monoxide and nitric oxide. Could help transport oxygen and increase its availability to the metabolically active neuronal tissues, though its low quantity in tissues as well as its high affinity for dioxygen, which may limit its oxygen-releasing ability, argue against it. The ferrous/deoxygenated form exhibits a nitrite reductase activity and it could produce nitric oxide which in turn inhibits cellular respiration in response to hypoxia. In its ferrous/deoxygenated state, it may also exhibit GDI (Guanine nucleotide Dissociation Inhibitor) activity toward heterotrimeric G-alpha proteins, thereby regulating signal transduction to facilitate neuroprotective responses in the wake of hypoxia and associated oxidative stress. The chain is Neuroglobin from Homo sapiens (Human).